Reading from the N-terminus, the 393-residue chain is Methylthioribose-1-phosphate isomerase (393 aa).

The Proton donor role is filled by aspartate 265.

Belongs to the eIF-2B alpha/beta/delta subunits family. MtnA subfamily.

The protein resides in the cytoplasm. It localises to the nucleus. The catalysed reaction is 5-(methylsulfanyl)-alpha-D-ribose 1-phosphate = 5-(methylsulfanyl)-D-ribulose 1-phosphate. It functions in the pathway amino-acid biosynthesis; L-methionine biosynthesis via salvage pathway; L-methionine from S-methyl-5-thio-alpha-D-ribose 1-phosphate: step 1/6. Catalyzes the interconversion of methylthioribose-1-phosphate (MTR-1-P) into methylthioribulose-1-phosphate (MTRu-1-P). The protein is Methylthioribose-1-phosphate isomerase of Cryptococcus neoformans var. neoformans serotype D (strain B-3501A) (Filobasidiella neoformans).